The chain runs to 237 residues: ATP synthase subunit a (237 aa).

4 consecutive transmembrane segments (helical) span residues 17 to 37, 78 to 98, 178 to 198, and 201 to 221; these read LSDM…AVAA, LGVT…PFWL, ILLG…CGSI, and MVIM…AFIF.

This sequence belongs to the ATPase A chain family. As to quaternary structure, F-type ATPases have 2 components, CF(1) - the catalytic core - and CF(0) - the membrane proton channel. CF(1) has five subunits: alpha(3), beta(3), gamma(1), delta(1), epsilon(1). CF(0) has three main subunits: a(1), b(2) and c(9-12). The alpha and beta chains form an alternating ring which encloses part of the gamma chain. CF(1) is attached to CF(0) by a central stalk formed by the gamma and epsilon chains, while a peripheral stalk is formed by the delta and b chains.

Its subcellular location is the cell membrane. Key component of the proton channel; it plays a direct role in the translocation of protons across the membrane. The protein is ATP synthase subunit a of Bacillus caldotenax.